The primary structure comprises 402 residues: Enoyl-[acyl-carrier-protein] reductase [NADH] (402 aa).

NAD(+) contacts are provided by residues Gly-48–Tyr-53, Phe-74–Glu-75, Asp-111–Ala-112, and Leu-140–Ala-141. Tyr-226 serves as a coordination point for substrate. The active-site Proton donor is Tyr-236. NAD(+) is bound by residues Lys-245 and Val-274–Thr-276.

Belongs to the TER reductase family. Monomer.

It carries out the reaction a 2,3-saturated acyl-[ACP] + NAD(+) = a (2E)-enoyl-[ACP] + NADH + H(+). The catalysed reaction is a 2,3-saturated acyl-CoA + NAD(+) = a (2E)-enoyl-CoA + NADH + H(+). Its pathway is lipid metabolism; fatty acid biosynthesis. In terms of biological role, involved in the final reduction of the elongation cycle of fatty acid synthesis (FAS II). Catalyzes the reduction of a carbon-carbon double bond in an enoyl moiety that is covalently linked to an acyl carrier protein (ACP). It can also use crotonyl-CoA. The sequence is that of Enoyl-[acyl-carrier-protein] reductase [NADH] from Xanthomonas oryzae pv. oryzae (strain MAFF 311018).